Consider the following 124-residue polypeptide: Ribonuclease pancreatic (124 aa).

The segment at 1-24 (KESSAMKFQRQHMDSSGSPSTNAN) is disordered. Residues Lys7 and Arg10 each coordinate substrate. Residue His12 is the Proton acceptor of the active site. Residues 14 to 24 (DSSGSPSTNAN) are compositionally biased toward polar residues. 4 disulfides stabilise this stretch: Cys26–Cys84, Cys40–Cys95, Cys58–Cys110, and Cys65–Cys72. Asn34 is a glycosylation site (N-linked (GlcNAc...) asparagine). Substrate-binding positions include 41–45 (KPVNT), Lys66, and Arg85. His119 acts as the Proton donor in catalysis.

This sequence belongs to the pancreatic ribonuclease family. As to quaternary structure, monomer. Interacts with and forms tight 1:1 complexes with RNH1. Dimerization of two such complexes may occur. Interaction with RNH1 inhibits this protein. Pancreas.

It localises to the secreted. It carries out the reaction an [RNA] containing cytidine + H2O = an [RNA]-3'-cytidine-3'-phosphate + a 5'-hydroxy-ribonucleotide-3'-[RNA].. The catalysed reaction is an [RNA] containing uridine + H2O = an [RNA]-3'-uridine-3'-phosphate + a 5'-hydroxy-ribonucleotide-3'-[RNA].. Endonuclease that catalyzes the cleavage of RNA on the 3' side of pyrimidine nucleotides. Acts on single-stranded and double-stranded RNA. In Chinchilla chinchilla (Short-tailed chinchilla), this protein is Ribonuclease pancreatic (RNASE1).